The sequence spans 431 residues: Homogentisate 1,2-dioxygenase (431 aa).

H286 functions as the Proton acceptor in the catalytic mechanism. H329 and E335 together coordinate Fe cation. The homogentisate site is built by Y344 and H365. Residue H365 participates in Fe cation binding.

This sequence belongs to the homogentisate dioxygenase family. As to quaternary structure, hexamer; dimer of trimers. Requires Fe cation as cofactor.

It carries out the reaction homogentisate + O2 = 4-maleylacetoacetate + H(+). It participates in amino-acid degradation; L-phenylalanine degradation; acetoacetate and fumarate from L-phenylalanine: step 4/6. Involved in the catabolism of homogentisate (2,5-dihydroxyphenylacetate or 2,5-OH-PhAc), a central intermediate in the degradation of phenylalanine and tyrosine. Catalyzes the oxidative ring cleavage of the aromatic ring of homogentisate to yield maleylacetoacetate. In Pseudomonas fluorescens (strain Pf0-1), this protein is Homogentisate 1,2-dioxygenase.